The following is a 988-amino-acid chain: Transposase for transposon Tn1546 (988 aa).

It belongs to the transposase 7 family.

Required for transposition of transposon Tn1546. This chain is Transposase for transposon Tn1546, found in Enterococcus faecium (Streptococcus faecium).